We begin with the raw amino-acid sequence, 71 residues long: Large ribosomal subunit protein uL29 (71 aa).

Residues 1-20 (MKARELQELRQGSSPQDLQE) are disordered.

It belongs to the universal ribosomal protein uL29 family.

In Clostridium kluyveri (strain ATCC 8527 / DSM 555 / NBRC 12016 / NCIMB 10680 / K1), this protein is Large ribosomal subunit protein uL29.